The following is a 584-amino-acid chain: ATP-dependent lipid A-core flippase (584 aa).

Transmembrane regions (helical) follow at residues 15–35, 63–83, 153–173, 251–271, and 277–297; these read LLGY…SMAV, IMWV…AGFI, LGML…CLVV, TGVT…FAGL, and GLTA…FAPV. The ABC transmembrane type-1 domain occupies 27–309; sequence LLSMLSMAVA…ISSVSQAMQR (283 aa). Positions 341–576 constitute an ABC transporter domain; it reads LSFDAVSFAY…GGLYARLHSL (236 aa). 375 to 382 serves as a coordination point for ATP; sequence GSSGSGKT.

It belongs to the ABC transporter superfamily. Lipid exporter (TC 3.A.1.106) family. Homodimer.

It localises to the cell inner membrane. It carries out the reaction ATP + H2O + lipid A-core oligosaccharideSide 1 = ADP + phosphate + lipid A-core oligosaccharideSide 2.. In terms of biological role, involved in lipopolysaccharide (LPS) biosynthesis. Translocates lipid A-core from the inner to the outer leaflet of the inner membrane. Transmembrane domains (TMD) form a pore in the inner membrane and the ATP-binding domain (NBD) is responsible for energy generation. The chain is ATP-dependent lipid A-core flippase from Chromobacterium violaceum (strain ATCC 12472 / DSM 30191 / JCM 1249 / CCUG 213 / NBRC 12614 / NCIMB 9131 / NCTC 9757 / MK).